The primary structure comprises 208 residues: Outer-membrane lipoprotein LolB (208 aa).

Positions 1–21 are cleaved as a signal peptide; it reads MLSSKRRLMRLLPLASLLLTA. Cys-22 carries the N-palmitoyl cysteine lipid modification. A lipid anchor (S-diacylglycerol cysteine) is attached at Cys-22.

This sequence belongs to the LolB family. Monomer.

It localises to the cell outer membrane. In terms of biological role, plays a critical role in the incorporation of lipoproteins in the outer membrane after they are released by the LolA protein. The protein is Outer-membrane lipoprotein LolB of Erwinia tasmaniensis (strain DSM 17950 / CFBP 7177 / CIP 109463 / NCPPB 4357 / Et1/99).